Here is a 451-residue protein sequence, read N- to C-terminus: Tol-Pal system protein TolB 1 (451 aa).

An N-terminal signal peptide occupies residues 1–19 (MTLRMLFAFALLAAAPAQA). Low complexity predominate over residues 18 to 29 (QAQQTEPQPAEE). Disordered stretches follow at residues 18–37 (QAQQ…GTVS) and 431–451 (NERR…PLLP).

The protein belongs to the TolB family. The Tol-Pal system is composed of five core proteins: the inner membrane proteins TolA, TolQ and TolR, the periplasmic protein TolB and the outer membrane protein Pal. They form a network linking the inner and outer membranes and the peptidoglycan layer.

It localises to the periplasm. Part of the Tol-Pal system, which plays a role in outer membrane invagination during cell division and is important for maintaining outer membrane integrity. The polypeptide is Tol-Pal system protein TolB 1 (Novosphingobium aromaticivorans (strain ATCC 700278 / DSM 12444 / CCUG 56034 / CIP 105152 / NBRC 16084 / F199)).